A 443-amino-acid polypeptide reads, in one-letter code: MNKLNVEVLKKQFPLVEQLINLDEVCWFNPNVTSLEEGLPHVGLNAEDIHVASARLKRFAPYLMKAFPETKAASGLIESPVVDIPKMKAALETQYNVPIFGRLMLKLDSHLPISGSIKARGGIYEVLVHAEKLAIATGLLSESDDYSKLLSGEFRQFFQQYSIAVGSTGNLGMSIGMMSAKLGFSVSVHMSADAREWKKNKLRSHGVNVVEYEQDYGVAVEQGRKQAESDPNCFFIDDENSQTLFLGYSVAGERLKQQFDDLGIVVDERHPLFVYLPCGVGGGPGGVAFGLKVAFGDHVHCIFAEPTHSPCMLLGVHTGLHDEIAVQDIGIDNLTAADGLAVGRPSGFVGRAMERLIDGYYTVTDERMYQLLGELSEREGINLEPSALAGMMGAVHVSGSLHYQTRLQLTDERLKNATHLVWATGGGMVPEAEMSADLAKSGR.

At K118 the chain carries N6-(pyridoxal phosphate)lysine.

It belongs to the serine/threonine dehydratase family. DsdA subfamily. Pyridoxal 5'-phosphate is required as a cofactor.

The catalysed reaction is D-serine = pyruvate + NH4(+). This is Probable D-serine dehydratase from Vibrio parahaemolyticus serotype O3:K6 (strain RIMD 2210633).